Reading from the N-terminus, the 395-residue chain is Oxalate oxidoreductase subunit alpha (395 aa).

As to quaternary structure, dimer of heterotrimer of one alpha, one beta and one delta subunit.

The catalysed reaction is oxidized 2[4Fe-4S]-[ferredoxin] + oxalate = reduced 2[4Fe-4S]-[ferredoxin] + 2 CO2. Catalyzes the anaerobic oxidation of oxalate using a broad range of electron acceptors, including ferredoxin and the nickel-dependent carbon monoxide dehydrogenase. Does not require coenzyme A as cosubstrate. Enables anaerobic growth on oxalate which is used as energy source by the bacteria. The protein is Oxalate oxidoreductase subunit alpha of Moorella thermoacetica (strain ATCC 39073 / JCM 9320).